The primary structure comprises 283 residues: Elongation factor Ts (283 aa).

The involved in Mg(2+) ion dislocation from EF-Tu stretch occupies residues 80-83; sequence TDFV.

This sequence belongs to the EF-Ts family.

The protein localises to the cytoplasm. Functionally, associates with the EF-Tu.GDP complex and induces the exchange of GDP to GTP. It remains bound to the aminoacyl-tRNA.EF-Tu.GTP complex up to the GTP hydrolysis stage on the ribosome. This chain is Elongation factor Ts, found in Salmonella gallinarum (strain 287/91 / NCTC 13346).